Reading from the N-terminus, the 261-residue chain is MAKSRFEYVKQYERLDRLLPETYIVIRIDGKGFHKFTKKHDFEKPNDLRCLNLMNAAARVVMSEFTDIVLAYGDSDEYSFVWSKSTELYERRESKLVSHVCSLFTSAFVFNWPKHFDIPLLSLPSFDGRAVLYPNMKVLRDYLHWRQVDCHINNLYNTTFWMLILKGGFTNTQAEEYLKGTVSAEKHEILFSKFGINYNFEPEIYKKGSIWIREPIDQEWHQQDKKFSVKQKKKMVLSILHVSLIDDDFWTSRPFLEVLLQ.

Mg(2+)-binding residues include Asp-29, Gly-30, and Asp-76. Residues 29 to 34 and 75 to 76 each bind GTP; these read DGKGFH and SD.

It belongs to the tRNA(His) guanylyltransferase family. The cofactor is Mg(2+).

It carries out the reaction a 5'-end ribonucleotide-tRNA(His) + GTP + ATP + H2O = a 5'-end phospho-guanosine-ribonucleotide-tRNA(His) + AMP + 2 diphosphate + H(+). Functionally, adds a GMP to the 5'-end of tRNA(His) after transcription and RNase P cleavage. This chain is tRNA(His) guanylyltransferase (thg1), found in Schizosaccharomyces pombe (strain 972 / ATCC 24843) (Fission yeast).